Here is a 338-residue protein sequence, read N- to C-terminus: MIVLGIESSCDDCCAAIVEDGVKILSNIKLSQKEHKKYYGVVPEIASRLHTEFIMSVCQKAITNAQIHASEIDLIAVTSKPGLIGSLIVGINFAKGLSIALKKPLICIDHILGHLYAPLMTIKIEYPFLSLILSGGHTILAKQNDFDDIEILGRTLDDACGEAFDKVAKHYKMGFPGGPNIEKLAKCGNQYAFNFPITIFDKKENRYDFSYSGLKTACIHQLEKFKDKNENITNNNIAASFQRVAFENLIIPIKRAIKDTNIKKLIISGGVASNLYLREKIKNLEVETYYPPIDLCTDNGAMIAGIGYLMYLKYGASPIETDANSRIENYKYTKGAKL.

His-110 and His-114 together coordinate Fe cation. Residues 132 to 136, Asp-165, Gly-178, and Asn-274 each bind substrate; that span reads ILSGG. Residue Asp-298 participates in Fe cation binding.

The protein belongs to the KAE1 / TsaD family. Fe(2+) is required as a cofactor.

It localises to the cytoplasm. The catalysed reaction is L-threonylcarbamoyladenylate + adenosine(37) in tRNA = N(6)-L-threonylcarbamoyladenosine(37) in tRNA + AMP + H(+). Functionally, required for the formation of a threonylcarbamoyl group on adenosine at position 37 (t(6)A37) in tRNAs that read codons beginning with adenine. Is involved in the transfer of the threonylcarbamoyl moiety of threonylcarbamoyl-AMP (TC-AMP) to the N6 group of A37, together with TsaE and TsaB. TsaD likely plays a direct catalytic role in this reaction. This is tRNA N6-adenosine threonylcarbamoyltransferase from Borrelia hermsii (strain HS1 / DAH).